Here is a 205-residue protein sequence, read N- to C-terminus: Putative epidermin response regulator (205 aa).

The segment at residues 103 to 200 is a DNA-binding region (ompR/PhoB-type); sequence KYIKYVNDDF…ERKLGYKILI (98 aa).

This sequence to the C-terminus of E.coli phosphate regulon transcriptional regulatory protein PhoB.

In Staphylococcus epidermidis, this protein is Putative epidermin response regulator (epiQ).